The chain runs to 386 residues: Cytotoxic granule associated RNA binding protein TIA1 (386 aa).

Position 1 is an N-acetylmethionine (M1). RRM domains are found at residues 7-83, 106-184, and 214-286; these read KTLY…WATT, FHVF…WATR, and CTVY…WGKE. A disordered region spans residues 354-386; that stretch reads MGPNYGVQPPQGQNGSMLPNQPSGYRVAGYETQ. A compositionally biased stretch (polar residues) spans 363 to 376; it reads PQGQNGSMLPNQPS.

As to quaternary structure, homooligomer; homooligomerization is induced by Zn(2+). Interacts with FASTK; the interactions leads to its phosphorylation. Interacts (via RRM1 and the C-terminal glutamine-rich (Q) sequence) with SNRPC/U1-C (via N-terminus); thereby facilitating spliceosomal U1 snRNP recruitment to 5' splice sites. Post-translationally, phosphorylated by FASTK; phosphorylation occurs after FAS ligation in FAS-mediated apoptosis and before DNA fragmentation. As to expression, expressed in heart, small intestine, kidney, liver, lung, skeletal muscle, testes, pancreas, and ovary (at protein level).

The protein resides in the nucleus. It localises to the cytoplasm. It is found in the stress granule. RNA-binding protein involved in the regulation of alternative pre-RNA splicing and mRNA translation by binding to uridine-rich (U-rich) RNA sequences. Binds to U-rich sequences immediately downstream from a 5' splice sites in a uridine-rich small nuclear ribonucleoprotein (U snRNP)-dependent fashion, thereby modulating alternative pre-RNA splicing. Preferably binds to the U-rich IAS1 sequence in a U1 snRNP-dependent manner; this binding is optimal if a 5' splice site is adjacent to IAS1. Activates the use of heterologous 5' splice sites; the activation depends on the intron sequence downstream from the 5' splice site, with a preference for a downstream U-rich sequence. By interacting with SNRPC/U1-C, promotes recruitment and binding of spliceosomal U1 snRNP to 5' splice sites followed by U-rich sequences, thereby facilitating atypical 5' splice site recognition by U1 snRNP. Activates splicing of alternative exons with weak 5' splice sites followed by a U-rich stretch on its own pre-mRNA and on TIAR mRNA. Acts as a modulator of alternative splicing for the apoptotic FAS receptor, thereby promoting apoptosis. Binds to the 5' splice site region of FAS intron 5 to promote accumulation of transcripts that include exon 6 at the expense of transcripts in which exon 6 is skipped, thereby leading to the transcription of a membrane-bound apoptotic FAS receptor, which promotes apoptosis. Binds to a conserved AU-rich cis element in COL2A1 intron 2 and modulates alternative splicing of COL2A1 exon 2. Also binds to the equivalent AT-rich element in COL2A1 genomic DNA, and may thereby be involved in the regulation of transcription. Binds specifically to a polypyrimidine-rich controlling element (PCE) located between the weak 5' splice site and the intronic splicing silencer of CFTR mRNA to promote exon 9 inclusion, thereby antagonizing PTB1 and its role in exon skipping of CFTR exon 9. Involved in the repression of mRNA translation by binding to AU-rich elements (AREs) located in mRNA 3' untranslated regions (3' UTRs), including target ARE-bearing mRNAs encoding TNF and PTGS2. Also participates in the cellular response to environmental stress, by acting downstream of the stress-induced phosphorylation of EIF2S1/EIF2A to promote the recruitment of untranslated mRNAs to cytoplasmic stress granules (SGs), leading to stress-induced translational arrest. Formation and recruitment to SGs is regulated by Zn(2+). Possesses nucleolytic activity against cytotoxic lymphocyte target cells. Functionally, displays enhanced splicing regulatory activity compared with TIA isoform Long. The chain is Cytotoxic granule associated RNA binding protein TIA1 (TIA1) from Homo sapiens (Human).